The chain runs to 464 residues: UDP-N-acetylmuramate--L-alanine ligase (464 aa).

ATP is bound at residue 118–124 (GTHGKTT).

Belongs to the MurCDEF family.

It localises to the cytoplasm. It carries out the reaction UDP-N-acetyl-alpha-D-muramate + L-alanine + ATP = UDP-N-acetyl-alpha-D-muramoyl-L-alanine + ADP + phosphate + H(+). The protein operates within cell wall biogenesis; peptidoglycan biosynthesis. Cell wall formation. This is UDP-N-acetylmuramate--L-alanine ligase from Dinoroseobacter shibae (strain DSM 16493 / NCIMB 14021 / DFL 12).